Reading from the N-terminus, the 486-residue chain is Serine/threonine-protein kinase 33 (486 aa).

The segment at 39 to 100 (VVEMSQTSST…WGRGNFTEGK (62 aa)) is disordered. Polar residues predominate over residues 41 to 53 (EMSQTSSTGSSEF). The span at 57-66 (PEKRKEKGAS) shows a compositional bias: basic and acidic residues. The span at 68 to 80 (DVTSGKDSPSKSS) shows a compositional bias: polar residues. Residues 116-381 (YTFGRILGQG…AKELLDNQWL (266 aa)) enclose the Protein kinase domain. Residues 122 to 130 (LGQGSFGMV) and Lys145 each bind ATP. The active-site Proton acceptor is Asp238. The interval 402–451 (KNNPESDEESTTDQRDSRSGQEESKVYQPSRNVPDVSNSSDEEEGKQVGR) is disordered. Ser407 carries the post-translational modification Phosphoserine. A compositionally biased stretch (basic and acidic residues) spans 413–426 (TDQRDSRSGQEESK). Over residues 428–440 (YQPSRNVPDVSNS) the composition is skewed to polar residues.

Belongs to the protein kinase superfamily. CAMK Ser/Thr protein kinase family. CaMK subfamily. Interacts with vimentin/VIM. Post-translationally, autophosphorylated.

It is found in the cytoplasm. Its subcellular location is the perinuclear region. The enzyme catalyses L-seryl-[protein] + ATP = O-phospho-L-seryl-[protein] + ADP + H(+). It carries out the reaction L-threonyl-[protein] + ATP = O-phospho-L-threonyl-[protein] + ADP + H(+). Functionally, serine/threonine protein kinase which phosphorylates vimentin/VIM. Therefore may play a specific role in the dynamic behavior of the intermediate filament cytoskeleton. In Bos taurus (Bovine), this protein is Serine/threonine-protein kinase 33 (STK33).